Here is an 84-residue protein sequence, read N- to C-terminus: CLAVATA3/ESR (CLE)-related protein 13 (84 aa).

A signal peptide spans 1-29 (MGRYTTDQVQVYVLVIVLCTFFSTLQARS). Residues 57–84 (KQVRDISGDRLSPAGPDPQHNGRSPPRK) form a disordered region. A hydroxyproline mark is found at proline 69 and proline 72. Proline 72 is a glycosylation site (O-linked (Ara...) hydroxyproline).

The protein belongs to the CLV3/ESR signal peptide family. The O-glycosylation (arabinosylation) of the hydroxyproline Pro-72 enhances binding affinity of the CLE13p peptide for its receptor. Expressed in young nodules throughout the central tissue. Expressed in the apical region of elongated nodules, corresponding to the meristematic and early infection zones.

It localises to the secreted. The protein localises to the extracellular space. Signaling peptide involved in the regulation of nodulation. Moves from root to shoot to function with the receptor kinase SUNN, in a signaling pathway that plays roles during cellular differentiation, both at the onset of nodulation, and later during nodule meristem development and subsequent homeostasis. Interacts with SUNN signaling to control nodule numbers. SUNN is involved in the autoregulation of nodulation (AON), a long distance systemic signaling from root to shoot and back again, which allows legumes to limit the number of root nodules formed based on available nitrogen and previous rhizobial colonization. The chain is CLAVATA3/ESR (CLE)-related protein 13 from Medicago truncatula (Barrel medic).